Consider the following 194-residue polypeptide: ATP-dependent Clp protease proteolytic subunit (194 aa).

Ser-97 functions as the Nucleophile in the catalytic mechanism. Residue His-122 is part of the active site.

Belongs to the peptidase S14 family. In terms of assembly, fourteen ClpP subunits assemble into 2 heptameric rings which stack back to back to give a disk-like structure with a central cavity, resembling the structure of eukaryotic proteasomes.

It is found in the cytoplasm. It carries out the reaction Hydrolysis of proteins to small peptides in the presence of ATP and magnesium. alpha-casein is the usual test substrate. In the absence of ATP, only oligopeptides shorter than five residues are hydrolyzed (such as succinyl-Leu-Tyr-|-NHMec, and Leu-Tyr-Leu-|-Tyr-Trp, in which cleavage of the -Tyr-|-Leu- and -Tyr-|-Trp bonds also occurs).. Its function is as follows. Cleaves peptides in various proteins in a process that requires ATP hydrolysis. Has a chymotrypsin-like activity. Plays a major role in the degradation of misfolded proteins. The polypeptide is ATP-dependent Clp protease proteolytic subunit (Thermus thermophilus (strain ATCC BAA-163 / DSM 7039 / HB27)).